The sequence spans 95 residues: FXYD domain-containing ion transport regulator 6 (95 aa).

The first 18 residues, 1-18 (MELVLVFLCSLLAPTVLA), serve as a signal peptide directing secretion. Topologically, residues 19–35 (SAAEKEKEMDPFHYDYQ) are extracellular. A helical transmembrane segment spans residues 36-58 (TLRIGGLVFAVVLFSVGILLILS). The Cytoplasmic portion of the chain corresponds to 59-95 (RRCKCSFNQKPRAPGDEEAQVENLITANATEPQKAEN).

This sequence belongs to the FXYD family. As to quaternary structure, regulatory subunit of the sodium/potassium-transporting ATPase which is composed of a catalytic alpha subunit, a non-catalytic beta subunit and an additional regulatory subunit. The regulatory subunit, a member of the FXYD protein family, modulates the enzymatic activity in a tissue- and isoform-specific way by changing affinities of the Na+/K+-ATPase toward Na(+), K(+) or ATP.

The protein localises to the cell membrane. Its function is as follows. Associates with and regulates the activity of the sodium/potassium-transporting ATPase (NKA) which catalyzes the hydrolysis of ATP coupled with the exchange of Na(+) and K(+) ions across the plasma membrane. Reduces the apparent affinity for intracellular Na(+) with no change in the apparent affinity for extracellular K(+). In addition to modulating NKA kinetics, may also function as a regulator of NKA localization to the plasma membrane. The protein is FXYD domain-containing ion transport regulator 6 (FXYD6) of Pongo abelii (Sumatran orangutan).